A 252-amino-acid polypeptide reads, in one-letter code: PF03932 family protein CutC (252 aa).

This sequence belongs to the CutC family.

It localises to the cytoplasm. The polypeptide is PF03932 family protein CutC (Pectobacterium atrosepticum (strain SCRI 1043 / ATCC BAA-672) (Erwinia carotovora subsp. atroseptica)).